A 423-amino-acid polypeptide reads, in one-letter code: Protein CLP1 homolog (423 aa).

Residues Glu-19, Lys-60, and Asp-122–Thr-127 each bind ATP.

This sequence belongs to the Clp1 family. Clp1 subfamily.

It localises to the nucleus. Required for endonucleolytic cleavage during polyadenylation-dependent pre-mRNA 3'-end formation. This chain is Protein CLP1 homolog (cbc), found in Culex quinquefasciatus (Southern house mosquito).